Consider the following 954-residue polypeptide: Endoplasmic reticulum aminopeptidase 2 (954 aa).

The Cytoplasmic segment spans residues 1–7 (MANSCRK). A helical; Signal-anchor for type II membrane protein transmembrane segment spans residues 8–28 (LIFNIYVVFYCSAVIMPQICI). The Lumenal segment spans residues 29–954 (CSQFTSSPID…TLRKWLLTSI (926 aa)). Residues Asn79 and Asn113 are each glycosylated (N-linked (GlcNAc...) asparagine). Residues Glu194 and 328-332 (GAMEN) each bind substrate. Residue His364 coordinates Zn(2+). The active-site Proton acceptor is the Glu365. Zn(2+) is bound by residues His368 and Glu387. N-linked (GlcNAc...) asparagine glycosylation occurs at Asn399. Cysteines 415 and 454 form a disulfide. N-linked (GlcNAc...) asparagine glycosylation is present at Asn644. Cysteines 753 and 760 form a disulfide.

It belongs to the peptidase M1 family. As to quaternary structure, heterodimer with ERAP1. Requires Zn(2+) as cofactor. Post-translationally, N-glycosylated.

It is found in the endoplasmic reticulum membrane. Functionally, aminopeptidase that plays a central role in peptide trimming, a step required for the generation of most HLA class I-binding peptides. Peptide trimming is essential to customize longer precursor peptides to fit them to the correct length required for presentation on MHC class I molecules. Preferentially hydrolyzes the basic residues Arg and Lys. This Bos taurus (Bovine) protein is Endoplasmic reticulum aminopeptidase 2 (ERAP2).